Consider the following 598-residue polypeptide: Arginine--tRNA ligase (598 aa).

A 'HIGH' region motif is present at residues 139–149 (ANPTGPMHVGH).

This sequence belongs to the class-I aminoacyl-tRNA synthetase family. In terms of assembly, monomer.

It is found in the cytoplasm. It carries out the reaction tRNA(Arg) + L-arginine + ATP = L-arginyl-tRNA(Arg) + AMP + diphosphate. This is Arginine--tRNA ligase from Bradyrhizobium sp. (strain BTAi1 / ATCC BAA-1182).